A 120-amino-acid chain; its full sequence is U13-lycotoxin-Ls1c (120 aa).

The first 16 residues, 1 to 16 (MKILFVLISILYAVYC), serve as a signal peptide directing secretion. A propeptide spanning residues 17–54 (FSSEEDVDSAYLANELEPVEDINSEQYAALEPKEEQER) is cleaved from the precursor. 3 disulfide bridges follow: cysteine 56–cysteine 70, cysteine 69–cysteine 87, and cysteine 78–cysteine 85. Positions 56–95 (CADMGQDRKDDCDCCLNIATCNCWFGRYFCSCTFGDYQTC) constitute an Agouti domain.

It belongs to the neurotoxin 05 (agouti) family. Contains 5 disulfide bonds. As to expression, expressed by the venom gland.

The protein localises to the secreted. The chain is U13-lycotoxin-Ls1c from Lycosa singoriensis (Wolf spider).